The sequence spans 234 residues: Opacity protein V28 (234 aa).

A signal peptide is located at residue alanine 1.

The protein belongs to the opacity porin family.

The protein localises to the cell outer membrane. Its function is as follows. Implicated in a number of adherence functions. OPA proteins are implicated in pathogenesis and are subject to phase variation. The chain is Opacity protein V28 from Neisseria gonorrhoeae.